Consider the following 287-residue polypeptide: Pantothenate synthetase (287 aa).

30 to 37 (MGNLHSGH) is an ATP binding site. H37 acts as the Proton donor in catalysis. A (R)-pantoate-binding site is contributed by Q61. Q61 contacts beta-alanine. ATP is bound at residue 149–152 (GEKD). Q155 provides a ligand contact to (R)-pantoate. ATP contacts are provided by residues V178 and 186-189 (LSSR).

The protein belongs to the pantothenate synthetase family. In terms of assembly, homodimer.

It localises to the cytoplasm. It carries out the reaction (R)-pantoate + beta-alanine + ATP = (R)-pantothenate + AMP + diphosphate + H(+). It functions in the pathway cofactor biosynthesis; (R)-pantothenate biosynthesis; (R)-pantothenate from (R)-pantoate and beta-alanine: step 1/1. Functionally, catalyzes the condensation of pantoate with beta-alanine in an ATP-dependent reaction via a pantoyl-adenylate intermediate. In Pseudomonas entomophila (strain L48), this protein is Pantothenate synthetase.